The primary structure comprises 139 residues: GSK3B-interacting protein (139 aa).

The tract at residues 1–22 (METDCNPMELSSMSGFEEGSEL) is disordered. The interval 41-45 (VNDVL) is required for PRKAR2A interaction; contributes to a protective effect against H(2)O(2)-induced apoptosis. The interaction with GSK3B and acts as a GSK3B inhibitor stretch occupies residues 115 to 139 (SPAYREAFGNALLQRLEALKRDGQS).

Belongs to the GSKIP family. As to quaternary structure, forms a complex composed of PRKAR2A or PRKAR2B, GSK3B and GSKIP through GSKIP interaction; facilitates PKA-induced phosphorylation of GSK3B leading to GSK3B inactivation; recruits DNM1L through GSK3B for PKA-mediated phosphorylation of DNM1L; promotes beta-catenin degradation through GSK3B-induced phosphorylation of beta-catenin; stabilizes beta-catenin and enhances Wnt-induced signaling through PKA-induced phosphorylation of beta-catenin. Interacts with GSK3B; induces GSK3B-mediated phosphorylation of GSKIP and inhibits GSK3B kinase activity. Phosphorylated by GSK3B. In terms of tissue distribution, detected in heart, brain, placenta, liver, skeletal muscle, kidney, testis, lung and pancreas.

It localises to the cytoplasm. The protein localises to the nucleus. Functionally, A-kinase anchoring protein for GSK3B and PKA that regulates or facilitates their kinase activity towards their targets. The ternary complex enhances Wnt-induced signaling by facilitating the GSK3B- and PKA-induced phosphorylation of beta-catenin leading to beta-catenin degradation and stabilization respectively. Upon cAMP activation, the ternary complex contributes to neuroprotection against oxidative stress-induced apoptosis by facilitating the PKA-induced phosphorylation of DML1 and PKA-induced inactivation of GSK3B. During neurite outgrowth promotes neuron proliferation; while increases beta-catenin-induced transcriptional activity through GSK3B kinase activity inhibition, reduces N-cadherin level to promote cell cycle progression. This is GSK3B-interacting protein from Homo sapiens (Human).